Reading from the N-terminus, the 572-residue chain is Secreted triacylglycerol lipase LIP6 (572 aa).

An N-terminal signal peptide occupies residues 1–23 (MYSTSLLRWLVVALVSAVPLVTA). Cys117 and Cys291 are oxidised to a cystine. Catalysis depends on Ser202, which acts as the Nucleophile. Asp351 is an active-site residue. N-linked (GlcNAc...) asparagine glycosylation is present at Asn360. The active site involves His385. The disordered stretch occupies residues 468–572 (KGGVWNDVLK…SSRRHVARFM (105 aa)). Basic and acidic residues predominate over residues 491 to 511 (PESKKATKKYKSESKAEKKQP). A compositionally biased stretch (low complexity) spans 512 to 525 (DSIPSSSSKSSSDN). Asn525 carries N-linked (GlcNAc...) asparagine glycosylation. A compositionally biased stretch (basic residues) spans 528–540 (AHAKYHAHGHGHG). Positions 541–562 (HASSNSNNGHSHSAKESSTSKG) are enriched in low complexity. Residues 563–572 (SSRRHVARFM) show a composition bias toward basic residues.

This sequence belongs to the AB hydrolase superfamily. Lipase family. Class Lip subfamily.

It localises to the secreted. The protein localises to the cell wall. The catalysed reaction is a triacylglycerol + H2O = a diacylglycerol + a fatty acid + H(+). It carries out the reaction a monoacylglycerol + H2O = glycerol + a fatty acid + H(+). It catalyses the reaction a diacylglycerol + H2O = a monoacylglycerol + a fatty acid + H(+). In terms of biological role, secreted lipase involved in Dandruff and seborrheic dermatitis (D/SD) probably via lipase-mediated breakdown of sebaceous lipids and release of irritating free fatty acids. Shows only minimal activity against triolein. Mostly converts monoolein to di- and triolein, while free fatty acids are only produced in low amounts. This Malassezia globosa (strain ATCC MYA-4612 / CBS 7966) (Dandruff-associated fungus) protein is Secreted triacylglycerol lipase LIP6.